The primary structure comprises 94 residues: MICOS complex subunit MIC12 (94 aa).

The helical transmembrane segment at 7-23 threads the bilayer; sequence YGSFSVVASVLGASYYY.

It belongs to the MICOS complex subunit Mic12 family. Component of the mitochondrial contact site and cristae organizing system (MICOS) complex.

It localises to the mitochondrion inner membrane. Component of the MICOS complex, a large protein complex of the mitochondrial inner membrane that plays crucial roles in the maintenance of crista junctions, inner membrane architecture, and formation of contact sites to the outer membrane. The protein is MICOS complex subunit MIC12 (AIM5) of Eremothecium gossypii (strain ATCC 10895 / CBS 109.51 / FGSC 9923 / NRRL Y-1056) (Yeast).